The primary structure comprises 441 residues: Keratin, type I cytoskeletal 15 (441 aa).

Positions 2-91 are head; sequence LLLGHASTST…GGSDLLLGTS (90 aa). The interval 92–127 is coil 1A; that stretch reads GKEAMQNLNDRLASYLDKVRSLEGKNHELELKIKDW. Residues 92–407 enclose the IF rod domain; that stretch reads GKEAMQNLND…MLLDSEDSKG (316 aa). A linker 1 region spans residues 128–149; that stretch reads YSQVIPGTGGPDARDYGHLEKE. The segment at 150 to 241 is coil 1B; sequence IEDLQNKVNN…KNHEEDMKAA (92 aa). Residues 242–261 form a linker 12 region; it reads SSGIAGQVNVELDAAPGTNL. Positions 262–403 are coil 2; the sequence is LDELDACRRD…ATYRMLLDSE (142 aa). The interval 404–441 is tail; the sequence is DSKGSIINHKILTAIEKLVDGIVLSTEVLEKQIPVLSY.

This sequence belongs to the intermediate filament family. As to quaternary structure, heterotetramer of two type I and two type II keratins. In terms of tissue distribution, expressed in skin.

The polypeptide is Keratin, type I cytoskeletal 15 (KRT15) (Protopterus aethiopicus (Marbled lungfish)).